A 180-amino-acid chain; its full sequence is MFEATTILGYKGEYNGKKCAIIGGDGQVTFGNCVLKNNATKIRTLYNGEILSGFAGSTADAFSLFDMFERILEGRKGDLVRSVLEFSKEWRKDKYLRKLEAMMIVLNTEHIYILSGTGDVVEPEDGTIAAIGSGGNYALSAARALHNYASLPPREIVEHSLAIAGELCIYTNTNIKILEL.

Threonine 5 is a catalytic residue. Residues glycine 165, cysteine 168, and threonine 171 each coordinate Na(+).

It belongs to the peptidase T1B family. HslV subfamily. As to quaternary structure, a double ring-shaped homohexamer of HslV is capped on each side by a ring-shaped HslU homohexamer. The assembly of the HslU/HslV complex is dependent on binding of ATP.

Its subcellular location is the cytoplasm. The enzyme catalyses ATP-dependent cleavage of peptide bonds with broad specificity.. Allosterically activated by HslU binding. Its function is as follows. Protease subunit of a proteasome-like degradation complex believed to be a general protein degrading machinery. The chain is ATP-dependent protease subunit HslV from Helicobacter hepaticus (strain ATCC 51449 / 3B1).